Here is a 372-residue protein sequence, read N- to C-terminus: Dual-specificity RNA methyltransferase RlmN (372 aa).

E94 acts as the Proton acceptor in catalysis. Residues 100–339 (DGDRATLCVS…VTIRKTRGDD (240 aa)) form the Radical SAM core domain. Residues C107 and C344 are joined by a disulfide bond. 3 residues coordinate [4Fe-4S] cluster: C114, C118, and C121. Residues 168–169 (GE), S200, 222–224 (SLH), and N301 each bind S-adenosyl-L-methionine. C344 (S-methylcysteine intermediate) is an active-site residue.

Belongs to the radical SAM superfamily. RlmN family. [4Fe-4S] cluster serves as cofactor.

The protein resides in the cytoplasm. It carries out the reaction adenosine(2503) in 23S rRNA + 2 reduced [2Fe-2S]-[ferredoxin] + 2 S-adenosyl-L-methionine = 2-methyladenosine(2503) in 23S rRNA + 5'-deoxyadenosine + L-methionine + 2 oxidized [2Fe-2S]-[ferredoxin] + S-adenosyl-L-homocysteine. The catalysed reaction is adenosine(37) in tRNA + 2 reduced [2Fe-2S]-[ferredoxin] + 2 S-adenosyl-L-methionine = 2-methyladenosine(37) in tRNA + 5'-deoxyadenosine + L-methionine + 2 oxidized [2Fe-2S]-[ferredoxin] + S-adenosyl-L-homocysteine. Specifically methylates position 2 of adenine 2503 in 23S rRNA and position 2 of adenine 37 in tRNAs. m2A2503 modification seems to play a crucial role in the proofreading step occurring at the peptidyl transferase center and thus would serve to optimize ribosomal fidelity. The sequence is that of Dual-specificity RNA methyltransferase RlmN from Aliivibrio fischeri (strain MJ11) (Vibrio fischeri).